The primary structure comprises 82 residues: Delta-actitoxin-Aeq2b 1 (82 aa).

The signal sequence occupies residues 1 to 19 (MNRLMILVFAAVILALASA). A propeptide spanning residues 20-26 (DEDVDIA) is cleaved from the precursor. Cystine bridges form between Cys-32/Cys-79, Cys-34/Cys-69, and Cys-62/Cys-80.

The protein belongs to the sea anemone sodium channel inhibitory toxin family. Type I subfamily.

It localises to the secreted. The protein localises to the nematocyst. In terms of biological role, binds specifically to voltage-gated sodium channels (Nav), thereby delaying their inactivation during signal transduction. Causes death to crabs. The chain is Delta-actitoxin-Aeq2b 1 from Actinia equina (Beadlet anemone).